The primary structure comprises 834 residues: Taste receptor type 1 member 2 (834 aa).

Residues 1 to 19 form the signal peptide; the sequence is MGPRARTVCFLFFLLWVLA. The Extracellular portion of the chain corresponds to 20-561; that stretch reads ELAENSDFHL…SFLEWHEAAT (542 aa). N-linked (GlcNAc...) asparagine glycosylation is found at Asn-84, Asn-292, Asn-312, Asn-363, Asn-423, Asn-482, and Asn-522. The helical transmembrane segment at 562–582 threads the bilayer; the sequence is IAVALLAALGFLXXXXXXXXX. Residues 583–597 are Cytoplasmic-facing; the sequence is XXXXXXPMVRSAGGP. Residues 598–618 traverse the membrane as a helical segment; the sequence is MCFLMLTLLLVAYMVVPVYVG. Residues 619-630 lie on the Extracellular side of the membrane; sequence PPKVTTCLCRQA. The helical transmembrane segment at 631–651 threads the bilayer; that stretch reads LFPVCFTICISCITMRSFQIV. The Cytoplasmic portion of the chain corresponds to 652-676; that stretch reads CVFKMASRFPRAYSYWVRYQGSYVS. A helical membrane pass occupies residues 677-697; the sequence is VAFITALKVVTVVISLLATGL. Residues 698 to 722 lie on the Extracellular side of the membrane; the sequence is NPTTRADTDDPKIMIISCNPNYRNS. Residues 723–743 form a helical membrane-spanning segment; sequence LLFNTSLDLLLSVVGFSFAYM. Topologically, residues 744–755 are cytoplasmic; sequence GKELPTNYNEAK. A helical transmembrane segment spans residues 756 to 776; sequence FITFSMTFYFTSSVSLCTFMS. At 777–779 the chain is on the extracellular side; it reads VYD. A helical membrane pass occupies residues 780–800; it reads GVLVTIVDLLVTVFNLLAISL. Residues 801-834 are Cytoplasmic-facing; the sequence is GYFGPKCYMILFYPERNTPAYFNSMIQGYTMRRD.

Belongs to the G-protein coupled receptor 3 family. TAS1R subfamily. In terms of assembly, forms heterodimers with TAS1R3.

It is found in the cell membrane. Putative taste receptor. TAS1R2/TAS1R3 recognizes diverse natural and synthetic sweeteners. The protein is Taste receptor type 1 member 2 (TAS1R2) of Cebuella pygmaea (Pygmy marmoset).